A 247-amino-acid polypeptide reads, in one-letter code: Probable transcriptional regulatory protein lpl1249 (247 aa).

This sequence belongs to the TACO1 family.

Its subcellular location is the cytoplasm. The sequence is that of Probable transcriptional regulatory protein lpl1249 from Legionella pneumophila (strain Lens).